Here is a 476-residue protein sequence, read N- to C-terminus: Serine/threonine-protein kinase chk-2 (476 aa).

The 62-residue stretch at 66 to 127 folds into the FHA domain; the sequence is FVCGRGSDDA…NGTLVNQEMI (62 aa). Residues 170 to 436 enclose the Protein kinase domain; it reads HVTSHSLGKG…AVELMSTQWM (267 aa). Residues 177 to 184, lysine 199, and 252 to 258 contribute to the ATP site; these read GKGGFGKV and EYVGGGE. The active-site Proton acceptor is aspartate 301. Residues 305-306 and aspartate 322 each bind ATP; that span reads EN.

This sequence belongs to the protein kinase superfamily. CAMK Ser/Thr protein kinase family. CHK2 subfamily. Mg(2+) is required as a cofactor. Highly expressed in germline tissue.

The protein localises to the nucleus. It carries out the reaction L-seryl-[protein] + ATP = O-phospho-L-seryl-[protein] + ADP + H(+). The enzyme catalyses L-threonyl-[protein] + ATP = O-phospho-L-threonyl-[protein] + ADP + H(+). Functionally, serine/threonine-protein kinase which is required for checkpoint-mediated cell cycle arrest, activation of DNA repair and apoptosis in response to the presence of DNA double-strand breaks. May also negatively regulate cell cycle progression during unperturbed cell cycles. Phosphorylates and inhibits cdc25 phosphatase, preventing entry into mitosis. Required for nuclear reorganization and homologous chromosome pairing during meiotic prophase. The protein is Serine/threonine-protein kinase chk-2 (chk-2) of Caenorhabditis elegans.